The sequence spans 544 residues: Chaperonin GroEL (544 aa).

Residues 30-33, Lys-51, 87-91, Gly-415, 478-480, and Asp-494 contribute to the ATP site; these read TLGP, DGTTT, and NAA.

This sequence belongs to the chaperonin (HSP60) family. In terms of assembly, forms a cylinder of 14 subunits composed of two heptameric rings stacked back-to-back. Interacts with the co-chaperonin GroES.

The protein resides in the cytoplasm. The catalysed reaction is ATP + H2O + a folded polypeptide = ADP + phosphate + an unfolded polypeptide.. Its function is as follows. Together with its co-chaperonin GroES, plays an essential role in assisting protein folding. The GroEL-GroES system forms a nano-cage that allows encapsulation of the non-native substrate proteins and provides a physical environment optimized to promote and accelerate protein folding. This is Chaperonin GroEL from Geobacter sulfurreducens (strain ATCC 51573 / DSM 12127 / PCA).